Consider the following 417-residue polypeptide: Valine--pyruvate aminotransferase (417 aa).

Lys249 bears the N6-(pyridoxal phosphate)lysine mark.

This sequence belongs to the class-I pyridoxal-phosphate-dependent aminotransferase family. As to quaternary structure, homodimer. Pyridoxal 5'-phosphate is required as a cofactor.

It is found in the cytoplasm. It carries out the reaction L-valine + pyruvate = 3-methyl-2-oxobutanoate + L-alanine. Its function is as follows. Involved in the biosynthesis of alanine. This chain is Valine--pyruvate aminotransferase (avtA), found in Escherichia coli (strain K12).